Consider the following 275-residue polypeptide: Envelope glycoprotein (275 aa).

Intrachain disulfides connect Cys1–Cys10, Cys18–Cys27, and Cys58–Cys62. Asn122 carries an N-linked (GlcNAc...) asparagine; by host glycan. Disulfide bonds link Cys164/Cys194, Cys187/Cys239, Cys204/Cys209, and Cys240/Cys245.

It belongs to the hantavirus envelope glycoprotein family. As to quaternary structure, homodimer. Homotetramer; forms heterotetrameric Gn-Gc spikes in the pre-fusion conformation. Homotrimer; forms homotrimer in the post-fusion conformation at acidic pH. Interacts (via C-terminus) with the nucleoprotein. In terms of processing, envelope polyprotein precursor is quickly cleaved in vivo just after synthesis, presumably by host signal peptidase.

The protein localises to the virion membrane. It localises to the host cell surface. The protein resides in the host Golgi apparatus membrane. Its subcellular location is the host endoplasmic reticulum membrane. In terms of biological role, forms homotetramers with glycoprotein N at the surface of the virion. Attaches the virion to host cell receptors including integrin ITGAV/ITGB3. This attachment induces virion internalization predominantly through clathrin-dependent endocytosis. Class II fusion protein that promotes fusion of viral membrane with host endosomal membrane after endocytosis of the virion. This is Envelope glycoprotein (GP) from Homo sapiens (Human).